A 647-amino-acid chain; its full sequence is Putative lipase atg15 (647 aa).

Over 1 to 18 the chain is Cytoplasmic; sequence MLPSGKRKADAFSCTSAA. A helical; Signal-anchor for type II membrane protein transmembrane segment spans residues 19 to 39; it reads RVTAKLALSFLALSTTPLVNA. Topologically, residues 40–647 are lumenal; sequence FSYEEPNAQI…EGGEGPVNDL (608 aa). N203, N225, N283, and N307 each carry an N-linked (GlcNAc...) asparagine glycan. S323 functions as the Charge relay system in the catalytic mechanism. N-linked (GlcNAc...) asparagine glycosylation is present at N469. A disordered region spans residues 597–626; sequence APALPSSVLTPSATATPPEGQPDDSGKRCR.

It belongs to the AB hydrolase superfamily. Lipase family. In terms of assembly, binds to both phosphatidylinositol (PI) and phosphatidylinositol 3,5-bisphosphate (PIP2).

The protein resides in the endosome. The protein localises to the multivesicular body membrane. It is found in the prevacuolar compartment membrane. The catalysed reaction is a triacylglycerol + H2O = a diacylglycerol + a fatty acid + H(+). Lipase which is essential for lysis of subvacuolar cytoplasm to vacuole targeted bodies and intravacuolar autophagic bodies. Involved in the lysis of intravacuolar multivesicular body (MVB) vesicles. The intravacuolar membrane disintegration by atg15 is critical to life span extension. In Neurospora crassa (strain ATCC 24698 / 74-OR23-1A / CBS 708.71 / DSM 1257 / FGSC 987), this protein is Putative lipase atg15 (atg15).